A 402-amino-acid polypeptide reads, in one-letter code: CMP-sialic acid transporter 3 (402 aa).

At 1 to 42 (MSGEVECRVCHAKVQVPMAAAAVSKAYDIHRSSVSSRQRALN) the chain is on the cytoplasmic side. The helical transmembrane segment at 43 to 63 (VLLVSGDCVLAGLQPILVYMC) threads the bilayer. Over 64 to 73 (KVDGKFKFSP) the chain is Lumenal. Residues 74–94 (VSVNFLTEITKIIFAIIMLCI) traverse the membrane as a helical segment. Over 95–118 (QARRLKVGEKPFLTVSTFMQAARN) the chain is Cytoplasmic. A helical transmembrane segment spans residues 119–139 (NVLLAVPALFYAINNYMKFVM). The Lumenal segment spans residues 140 to 146 (QLYFNPA). Residues 147–167 (TVKMLGNLKVLVIAVLLKVIM) traverse the membrane as a helical segment. Topologically, residues 168–170 (RRR) are cytoplasmic. A helical membrane pass occupies residues 171–191 (FSTIQWEALALLLIGISVNQL). Residues 192 to 202 (KSLPEGSSTLG) are Lumenal-facing. A helical transmembrane segment spans residues 203-223 (LPVAAGAYLYTLFFVTVPALA). The Cytoplasmic segment spans residues 224–243 (SVYNEKALKSQFDTSIYLQN). Residues 244–264 (LFLYGYGAIFNFLGLVITAII) form a helical membrane-spanning segment. Topologically, residues 265 to 280 (QGPSSFNILEGHSKAT) are lumenal. The helical transmembrane segment at 281 to 301 (MFLICNNAAQGILSSFFFKYA) threads the bilayer. Over 302–321 (DTILKKYSSTIATIFTGVAS) the chain is Cytoplasmic. Residues 322–342 (AVLFGHTLTINFVLAISIVII) traverse the membrane as a helical segment. The Lumenal segment spans residues 343-402 (SMHQYLSNQIKDEVPSSKIEMGDAHEHRSKESVVVNVSDSIATEAKHRHGTDERQPLLPV).

This sequence belongs to the nucleotide-sugar transporter family. CMP-Sialate:CMP antiporter (TC 2.A.7.12) subfamily.

It is found in the golgi apparatus membrane. Sugar transporter involved in the transport of CMP-sialic acid from the cytoplasm into the Golgi. May transport important nucleotide sugars such as CMP-Kdo (2-keto-3-deoxy-D-manno-octulosonic acid) in physiological conditions. The protein is CMP-sialic acid transporter 3 of Oryza sativa subsp. indica (Rice).